The following is a 386-amino-acid chain: EARP and GARP complex-interacting protein 1 (386 aa).

An N-acetylmethionine modification is found at M1. WD repeat units lie at residues 132-172, 182-222, 226-266, and 270-310; these read GAQG…SQAV, RGQL…QIYC, AHGQ…EPVK, and EHSH…SEPF. Residues 312 to 332 are disordered; the sequence is HLVDDDDVSDPEEHHTEKSKE. Phosphoserine is present on S320. The segment covering 322 to 332 has biased composition (basic and acidic residues); it reads PEEHHTEKSKE. Residues 344-384 form a WD 5 repeat; it reads EHEDSVYAVDWASADPWLFASLSYDGRLVINRVPRALKYHI.

The protein belongs to the WD repeat EIPR1 family. Interacts with two multisubunit tethering complexes: EARP composed of VPS50, VPS51, VPS52 and VPS53 subunits and GARP complex composed of VPS51, VPS52, VPS53 and VPS54 subunits. Interacts with SNAP29. In terms of tissue distribution, ubiquitous. Highly expressed in brain, adipose tissue, spleen and kidney (at protein level).

It is found in the golgi apparatus. It localises to the trans-Golgi network. Its function is as follows. Acts as a component of endosomal retrieval machinery that is involved in protein transport from early endosomes to either recycling endosomes or the trans-Golgi network. Mediates the recruitment of Golgi-associated retrograde protein (GARP) complex to the trans-Golgi network and controls early endosome-to-Golgi transport of internalized protein. Promotes the recycling of internalized transferrin receptor (TFRC) to the plasma membrane through interaction with endosome-associated recycling protein (EARP) complex. Controls proper insulin distribution and secretion, and retention of cargo in mature dense core vesicles. Required for the stability of the endosome-associated retrograde protein (EARP) complex subunits and for proper localization and association of EARP with membranes. The protein is EARP and GARP complex-interacting protein 1 of Rattus norvegicus (Rat).